The primary structure comprises 318 residues: Quinolinate synthase (318 aa).

Positions 34 and 51 each coordinate iminosuccinate. C96 serves as a coordination point for [4Fe-4S] cluster. Iminosuccinate-binding positions include 122–124 (YIN) and S139. C182 lines the [4Fe-4S] cluster pocket. Residues 208–210 (HPE) and T225 contribute to the iminosuccinate site. C275 is a [4Fe-4S] cluster binding site.

The protein belongs to the quinolinate synthase family. Type 2 subfamily. [4Fe-4S] cluster is required as a cofactor.

Its subcellular location is the cytoplasm. The enzyme catalyses iminosuccinate + dihydroxyacetone phosphate = quinolinate + phosphate + 2 H2O + H(+). The protein operates within cofactor biosynthesis; NAD(+) biosynthesis; quinolinate from iminoaspartate: step 1/1. Its function is as follows. Catalyzes the condensation of iminoaspartate with dihydroxyacetone phosphate to form quinolinate. In Synechocystis sp. (strain ATCC 27184 / PCC 6803 / Kazusa), this protein is Quinolinate synthase.